Here is a 341-residue protein sequence, read N- to C-terminus: MFYNSSKILFTTIMIIGTLITVTSNSWLGAWMGLEINLLSFIPLLSDNNNLMSTEASLKYFLTQALASTVLLFSSILLMLANNLNNEINESFTSMIIMSALLLKSGAAPFHFWFPNMMEGLTWMNALMLMTWQKIAPLMLISYLNIKNLLLISVILSVIIGAIGGLNQTSLRKLMAFSSINHLGWMLSSLMISESIWLIYFIFYSFLSFVLTFMFNIFKLFHLNQLFSWFVNSKILKFSLFMNFLSLGGLPPFLGFLPKWLVIQQLTMCNQYFLLTLMMMSTLITLFFYLRICYSAFMLNYFENNWIMEMNMNSNNTNLYLIMTFFSIFGLFLISLFFFML.

Helical transmembrane passes span 8-28 (ILFTTIMIIGTLITVTSNSWL), 61-81 (FLTQALASTVLLFSSILLMLA), 95-115 (MIIMSALLLKSGAAPFHFWFP), 121-141 (LTWMNALMLMTWQKIAPLMLI), 146-166 (IKNLLLISVILSVIIGAIGGL), 174-194 (LMAFSSINHLGWMLSSLMISE), 195-215 (SIWLIYFIFYSFLSFVLTFMF), 238-258 (FSLFMNFLSLGGLPPFLGFLP), 273-293 (FLLTLMMMSTLITLFFYLRIC), and 321-341 (LIMTFFSIFGLFLISLFFFML).

Belongs to the complex I subunit 2 family.

The protein localises to the mitochondrion inner membrane. The catalysed reaction is a ubiquinone + NADH + 5 H(+)(in) = a ubiquinol + NAD(+) + 4 H(+)(out). Core subunit of the mitochondrial membrane respiratory chain NADH dehydrogenase (Complex I) that is believed to belong to the minimal assembly required for catalysis. Complex I functions in the transfer of electrons from NADH to the respiratory chain. The immediate electron acceptor for the enzyme is believed to be ubiquinone. In Drosophila yakuba (Fruit fly), this protein is NADH-ubiquinone oxidoreductase chain 2 (mt:ND2).